The sequence spans 128 residues: MRFAIVVTGPAYGTQQASSAFQFAQALIADGHELSSVFFYREGVYNANQLTSPASDEFDLVRAWQQLNAQHGVALNICVAAALRRGVVDETEAGRLGLASSNLQQGFTLSGLGALAEASLTCDRVVQF.

The Cysteine persulfide intermediate role is filled by Cys78.

Belongs to the DsrE/TusD family. As to quaternary structure, heterohexamer, formed by a dimer of trimers. The hexameric TusBCD complex contains 2 copies each of TusB, TusC and TusD. The TusBCD complex interacts with TusE.

It is found in the cytoplasm. Its function is as follows. Part of a sulfur-relay system required for 2-thiolation of 5-methylaminomethyl-2-thiouridine (mnm(5)s(2)U) at tRNA wobble positions. Accepts sulfur from TusA and transfers it in turn to TusE. The sequence is that of Sulfurtransferase TusD from Escherichia coli (strain K12 / MC4100 / BW2952).